Reading from the N-terminus, the 369-residue chain is Oleoyl-acyl carrier protein thioesterase, chloroplastic (369 aa).

Catalysis depends on residues Asn262, His264, and Cys299.

The protein belongs to the acyl-ACP thioesterase family.

The protein resides in the plastid. It localises to the chloroplast. It carries out the reaction (9Z)-octadecenoyl-[ACP] + H2O = (9Z)-octadecenoate + holo-[ACP] + H(+). In terms of biological role, plays an essential role in chain termination during de novo fatty acid synthesis. High thioesterase activity for oleoyl-ACP versus other acyl-ACPs. In Coriandrum sativum (Coriander), this protein is Oleoyl-acyl carrier protein thioesterase, chloroplastic (FATA).